We begin with the raw amino-acid sequence, 566 residues long: Lactase-like protein (566 aa).

An N-terminal signal peptide occupies residues Met1–Thr20. Residues Ala21–Glu540 are Extracellular-facing. N-linked (GlcNAc...) asparagine glycosylation is found at Asn170 and Asn244. A helical transmembrane segment spans residues Ile541–Leu561. Residues Leu562–Gly566 are Cytoplasmic-facing.

Belongs to the glycosyl hydrolase 1 family. Klotho subfamily. May form dimers. As to expression, strongly expressed in the lens of the eye, where it localizes to the equatorial epithelium and outer layers of newly extending fiber cells (at protein level). May also be expressed in kidney and skin. However, another study suggests that expression is specific to eye and is minimal in other tissues.

It is found in the endoplasmic reticulum membrane. Functionally, plays a role in formation of the lens suture in the eye, which is important for normal optical properties of the lens. The chain is Lactase-like protein (Lctl) from Mus musculus (Mouse).